We begin with the raw amino-acid sequence, 152 residues long: Ribosome maturation factor RimP (152 aa).

Belongs to the RimP family.

The protein localises to the cytoplasm. Its function is as follows. Required for maturation of 30S ribosomal subunits. In Paraburkholderia xenovorans (strain LB400), this protein is Ribosome maturation factor RimP.